Reading from the N-terminus, the 362-residue chain is Endolytic peptidoglycan transglycosylase RlpA (362 aa).

The signal sequence occupies residues 1–17; that stretch reads MRKQWLGICIAAGMLAA. A lipid anchor (N-palmitoyl cysteine) is attached at cysteine 18. Cysteine 18 carries the S-diacylglycerol cysteine lipid modification. The tract at residues 198–276 is disordered; sequence PDLSGGAGTS…PSTTPATSPA (79 aa). Low complexity predominate over residues 262–276; that stretch reads PVVTAPSTTPATSPA. The 77-residue stretch at 285 to 361 folds into the SPOR domain; it reads QSASGNFMVQ…AQLQSFITTA (77 aa).

Belongs to the RlpA family.

Its subcellular location is the cell membrane. Its function is as follows. Lytic transglycosylase with a strong preference for naked glycan strands that lack stem peptides. In Escherichia coli O157:H7, this protein is Endolytic peptidoglycan transglycosylase RlpA.